The sequence spans 189 residues: Resolvase (189 aa).

The Resolvase/invertase-type recombinase catalytic domain occupies Met1–Gly139. The active-site O-(5'-phospho-DNA)-serine intermediate is the Ser9. Residues Glu130 to Lys151 form a disordered region. The segment at residues Ile165–Asn184 is a DNA-binding region (H-T-H motif).

The protein belongs to the site-specific recombinase resolvase family.

In terms of biological role, a likely role for the res protein would be to stabilize pIP404 by reducing the number of plasmid multimers resulting from homologous recombination. The protein is Resolvase (res) of Clostridium perfringens.